Here is a 191-residue protein sequence, read N- to C-terminus: MMPRLILASTSAYRRQLLSRLQLEFDTGRPEVDEQPQSGEAPSALASRLAAEKAAAVAVRLPGAWVIGSDQVADLDGQALGKPGTRAQAQAQLTAMSGRTVRFHTAVSLIGPERELHALDLTEVQLRALTPAEIERYLDAEPALDCAGSFKCEGLGISLFDAIRSQDPTALVGLPLIALARLLREAGFHLP.

The active-site Proton acceptor is Asp-70.

Belongs to the Maf family. YceF subfamily. The cofactor is a divalent metal cation.

The protein resides in the cytoplasm. The enzyme catalyses N(7)-methyl-GTP + H2O = N(7)-methyl-GMP + diphosphate + H(+). Functionally, nucleoside triphosphate pyrophosphatase that hydrolyzes 7-methyl-GTP (m(7)GTP). May have a dual role in cell division arrest and in preventing the incorporation of modified nucleotides into cellular nucleic acids. This is 7-methyl-GTP pyrophosphatase from Xanthomonas oryzae pv. oryzae (strain KACC10331 / KXO85).